We begin with the raw amino-acid sequence, 87 residues long: Small ribosomal subunit protein bS20 (87 aa).

Residues 1 to 27 are disordered; it reads MANIKSAKKRAVTSEKRRKHNASRRSM.

The protein belongs to the bacterial ribosomal protein bS20 family.

In terms of biological role, binds directly to 16S ribosomal RNA. This is Small ribosomal subunit protein bS20 from Erwinia tasmaniensis (strain DSM 17950 / CFBP 7177 / CIP 109463 / NCPPB 4357 / Et1/99).